Consider the following 453-residue polypeptide: Serine/threonine-protein phosphatase 2A regulatory subunit B'' subunit gamma (453 aa).

The disordered stretch occupies residues 1-27; sequence MDWKDVLRRRLASPNSDPKRKKSEQEL. EF-hand domains are found at residues 273–308 and 341–376; these read PSAL…TMTN and KEPA…IQEL. Positions 286, 288, 290, 292, and 297 each coordinate Ca(2+).

Interacts with MCM3AP/GANP, PPP5C, and the phosphatase 2A core enzyme composed of the PPP2CA catalytic subunit and the constant regulatory subunit PPP2R1A. Finds in a complex with ABCB1, TFPI2 and PPP2R3C; leading to the dephosphorylation of ABCB1.

It localises to the nucleus. The protein resides in the cytoplasm. Its function is as follows. May regulate MCM3AP phosphorylation through phosphatase recruitment. May act as a negative regulator of ABCB1 expression and function through the dephosphorylation of ABCB1 by TFPI2/PPP2R3C complex. May play a role in the activation-induced cell death of B-cells. This is Serine/threonine-protein phosphatase 2A regulatory subunit B'' subunit gamma (Ppp2r3c) from Rattus norvegicus (Rat).